The following is a 695-amino-acid chain: Elongation factor G (695 aa).

In terms of domain architecture, tr-type G spans Asp-12–Leu-286. GTP is bound by residues Ala-21–Thr-28, Asp-85–His-89, and Asn-139–Asp-142.

It belongs to the TRAFAC class translation factor GTPase superfamily. Classic translation factor GTPase family. EF-G/EF-2 subfamily.

It is found in the cytoplasm. Catalyzes the GTP-dependent ribosomal translocation step during translation elongation. During this step, the ribosome changes from the pre-translocational (PRE) to the post-translocational (POST) state as the newly formed A-site-bound peptidyl-tRNA and P-site-bound deacylated tRNA move to the P and E sites, respectively. Catalyzes the coordinated movement of the two tRNA molecules, the mRNA and conformational changes in the ribosome. In Thermotoga sp. (strain RQ2), this protein is Elongation factor G.